Reading from the N-terminus, the 393-residue chain is Phosphoenolpyruvate/phosphate translocator 3, chloroplastic (393 aa).

The N-terminal 65 residues, M1 to R65, are a transit peptide targeting the chloroplast. Helical transmembrane passes span L89–F109, Y124–L144, A164–V183, F195–L217, L232–Y249, I270–F290, and T362–Y382. An EamA domain is found at P123–S228.

Belongs to the TPT transporter family. PPT (TC 2.A.7.9) subfamily.

It localises to the plastid. The protein resides in the chloroplast membrane. In terms of biological role, phosphoenolpyruvate/phosphate translocator that transports phosphoenolpyruvate (PEP) and dihydroxyacetone phosphate. The chain is Phosphoenolpyruvate/phosphate translocator 3, chloroplastic (PPT3) from Oryza sativa subsp. japonica (Rice).